The sequence spans 277 residues: Shikimate dehydrogenase (NADP(+)) (277 aa).

Residues 15–17 (SLS) and Thr62 each bind shikimate. Lys66 (proton acceptor) is an active-site residue. Positions 87 and 102 each coordinate shikimate. NADP(+) contacts are provided by residues 127-131 (GAGGA), 151-156 (NRTVSK), and Ile219. Tyr221 contributes to the shikimate binding site. Position 242 (Gly242) interacts with NADP(+).

Belongs to the shikimate dehydrogenase family. Homodimer.

The enzyme catalyses shikimate + NADP(+) = 3-dehydroshikimate + NADPH + H(+). It participates in metabolic intermediate biosynthesis; chorismate biosynthesis; chorismate from D-erythrose 4-phosphate and phosphoenolpyruvate: step 4/7. Involved in the biosynthesis of the chorismate, which leads to the biosynthesis of aromatic amino acids. Catalyzes the reversible NADPH linked reduction of 3-dehydroshikimate (DHSA) to yield shikimate (SA). This Geobacillus sp. (strain WCH70) protein is Shikimate dehydrogenase (NADP(+)).